Here is an 83-residue protein sequence, read N- to C-terminus: Mitochondrial import inner membrane translocase subunit Tim8 B (83 aa).

The residue at position 2 (Ala-2) is an N-acetylalanine. The Twin CX3C motif signature appears at 36 to 59 (CWDKCVEKPGNRLDSRTENCLSSC). Intrachain disulfides connect Cys-36-Cys-59 and Cys-40-Cys-55.

The protein belongs to the small Tim family. Heterohexamer; possibly composed of 3 copies of TIMM8B and 3 copies of TIMM13, named soluble 70 kDa complex. Associates with the TIM22 complex, whose core is composed of TIMM22. Ubiquitous, with highest expression in heart, kidney, liver and skeletal muscle.

The protein resides in the mitochondrion inner membrane. Probable mitochondrial intermembrane chaperone that participates in the import and insertion of some multi-pass transmembrane proteins into the mitochondrial inner membrane. Also required for the transfer of beta-barrel precursors from the TOM complex to the sorting and assembly machinery (SAM complex) of the outer membrane. Acts as a chaperone-like protein that protects the hydrophobic precursors from aggregation and guide them through the mitochondrial intermembrane space. This Homo sapiens (Human) protein is Mitochondrial import inner membrane translocase subunit Tim8 B (TIMM8B).